Here is a 251-residue protein sequence, read N- to C-terminus: Hydroxyacylglutathione hydrolase (251 aa).

Zn(2+)-binding residues include His-59, His-61, Asp-63, His-64, His-118, Asp-141, and His-179.

It belongs to the metallo-beta-lactamase superfamily. Glyoxalase II family. As to quaternary structure, monomer. Requires Zn(2+) as cofactor.

It catalyses the reaction an S-(2-hydroxyacyl)glutathione + H2O = a 2-hydroxy carboxylate + glutathione + H(+). It participates in secondary metabolite metabolism; methylglyoxal degradation; (R)-lactate from methylglyoxal: step 2/2. Functionally, thiolesterase that catalyzes the hydrolysis of S-D-lactoyl-glutathione to form glutathione and D-lactic acid. In Prochlorococcus marinus (strain NATL1A), this protein is Hydroxyacylglutathione hydrolase.